Reading from the N-terminus, the 109-residue chain is Nucleoid-associated protein Ldb1634 (109 aa).

Positions 18-40 (MMKQAKKLQEQMAQEQENITTQE) are disordered.

This sequence belongs to the YbaB/EbfC family. As to quaternary structure, homodimer.

It is found in the cytoplasm. It localises to the nucleoid. Binds to DNA and alters its conformation. May be involved in regulation of gene expression, nucleoid organization and DNA protection. The polypeptide is Nucleoid-associated protein Ldb1634 (Lactobacillus delbrueckii subsp. bulgaricus (strain ATCC 11842 / DSM 20081 / BCRC 10696 / JCM 1002 / NBRC 13953 / NCIMB 11778 / NCTC 12712 / WDCM 00102 / Lb 14)).